The following is a 214-amino-acid chain: 3-isopropylmalate dehydratase small subunit (214 aa).

It belongs to the LeuD family. LeuD type 1 subfamily. In terms of assembly, heterodimer of LeuC and LeuD.

It catalyses the reaction (2R,3S)-3-isopropylmalate = (2S)-2-isopropylmalate. Its pathway is amino-acid biosynthesis; L-leucine biosynthesis; L-leucine from 3-methyl-2-oxobutanoate: step 2/4. In terms of biological role, catalyzes the isomerization between 2-isopropylmalate and 3-isopropylmalate, via the formation of 2-isopropylmaleate. This Pseudomonas putida (strain GB-1) protein is 3-isopropylmalate dehydratase small subunit.